The sequence spans 197 residues: Imidazoleglycerol-phosphate dehydratase (197 aa).

The protein belongs to the imidazoleglycerol-phosphate dehydratase family.

It is found in the cytoplasm. It catalyses the reaction D-erythro-1-(imidazol-4-yl)glycerol 3-phosphate = 3-(imidazol-4-yl)-2-oxopropyl phosphate + H2O. Its pathway is amino-acid biosynthesis; L-histidine biosynthesis; L-histidine from 5-phospho-alpha-D-ribose 1-diphosphate: step 6/9. This Syntrophobacter fumaroxidans (strain DSM 10017 / MPOB) protein is Imidazoleglycerol-phosphate dehydratase.